The chain runs to 561 residues: Dihydroxy-acid dehydratase (561 aa).

Cys-50 is a binding site for [2Fe-2S] cluster. A Mg(2+)-binding site is contributed by Asp-82. Cys-123 contacts [2Fe-2S] cluster. Positions 124 and 125 each coordinate Mg(2+). Residue Lys-125 is modified to N6-carboxylysine. Cys-195 lines the [2Fe-2S] cluster pocket. Residue Glu-447 participates in Mg(2+) binding. Ser-473 acts as the Proton acceptor in catalysis.

The protein belongs to the IlvD/Edd family. In terms of assembly, homodimer. [2Fe-2S] cluster serves as cofactor. Mg(2+) is required as a cofactor.

The enzyme catalyses (2R)-2,3-dihydroxy-3-methylbutanoate = 3-methyl-2-oxobutanoate + H2O. It catalyses the reaction (2R,3R)-2,3-dihydroxy-3-methylpentanoate = (S)-3-methyl-2-oxopentanoate + H2O. Its pathway is amino-acid biosynthesis; L-isoleucine biosynthesis; L-isoleucine from 2-oxobutanoate: step 3/4. It functions in the pathway amino-acid biosynthesis; L-valine biosynthesis; L-valine from pyruvate: step 3/4. Its function is as follows. Functions in the biosynthesis of branched-chain amino acids. Catalyzes the dehydration of (2R,3R)-2,3-dihydroxy-3-methylpentanoate (2,3-dihydroxy-3-methylvalerate) into 2-oxo-3-methylpentanoate (2-oxo-3-methylvalerate) and of (2R)-2,3-dihydroxy-3-methylbutanoate (2,3-dihydroxyisovalerate) into 2-oxo-3-methylbutanoate (2-oxoisovalerate), the penultimate precursor to L-isoleucine and L-valine, respectively. In Rippkaea orientalis (strain PCC 8801 / RF-1) (Cyanothece sp. (strain PCC 8801)), this protein is Dihydroxy-acid dehydratase.